Consider the following 576-residue polypeptide: Aspartate--tRNA ligase (576 aa).

Glu-173 lines the L-aspartate pocket. An aspartate region spans residues 197–200 (QLFK). Arg-219 provides a ligand contact to L-aspartate. Residues 219–221 (RDE) and Gln-228 contribute to the ATP site. His-438 serves as a coordination point for L-aspartate. Glu-470 is a binding site for ATP. Arg-477 contacts L-aspartate. 522 to 525 (GLDR) lines the ATP pocket.

This sequence belongs to the class-II aminoacyl-tRNA synthetase family. Type 1 subfamily. Homodimer.

It localises to the cytoplasm. The enzyme catalyses tRNA(Asp) + L-aspartate + ATP = L-aspartyl-tRNA(Asp) + AMP + diphosphate. Functionally, catalyzes the attachment of L-aspartate to tRNA(Asp) in a two-step reaction: L-aspartate is first activated by ATP to form Asp-AMP and then transferred to the acceptor end of tRNA(Asp). This is Aspartate--tRNA ligase from Aster yellows witches'-broom phytoplasma (strain AYWB).